We begin with the raw amino-acid sequence, 66 residues long: Small vasohibin-binding protein (66 aa).

The segment covering 1–23 (MDPPARKEKTKVKESVSRVEKAK) has biased composition (basic and acidic residues). The interval 1–31 (MDPPARKEKTKVKESVSRVEKAKQKSAQQEL) is disordered. A coiled-coil region spans residues 5–52 (ARKEKTKVKESVSRVEKAKQKSAQQELKQRQRAEIYALNRVMTELEQQ).

This sequence belongs to the SVBP family. In terms of assembly, interacts with VASH1 and VASH2.

It is found in the cytoplasm. The protein resides in the secreted. The protein localises to the cytoskeleton. Functionally, enhances the tyrosine carboxypeptidase activity of VASH1 and VASH2, thereby promoting the removal of the C-terminal tyrosine residue of alpha-tubulin. This activity is critical for spindle function and accurate chromosome segregation during mitosis since microtubule detyronisation regulates mitotic spindle length and postioning. Also required to enhance the solubility and secretion of VASH1 and VASH2. Plays a role in axon and excitatory synapse formation. This is Small vasohibin-binding protein from Homo sapiens (Human).